Here is a 521-residue protein sequence, read N- to C-terminus: Probable feruloyl esterase B (521 aa).

The first 17 residues, 1–17 (MKVSSLLSVALPGAALA), serve as a signal peptide directing secretion. 2 cysteine pairs are disulfide-bonded: Cys-26-Cys-72 and Cys-61-Cys-111. Residues Asn-37, Asn-51, Asn-77, Asn-95, Asn-144, and Asn-177 are each glycosylated (N-linked (GlcNAc...) asparagine). 3 disulfides stabilise this stretch: Cys-184–Cys-438, Cys-253–Cys-270, and Cys-279–Cys-288. The Acyl-ester intermediate role is filled by Ser-185. Positions 254, 257, 259, 261, and 263 each coordinate Ca(2+). Residues Asn-284, Asn-347, Asn-352, and Asn-378 are each glycosylated (N-linked (GlcNAc...) asparagine). Active-site charge relay system residues include Asp-397 and His-437. Residues Asn-488 and Asn-511 are each glycosylated (N-linked (GlcNAc...) asparagine). Cys-498 and Cys-520 form a disulfide bridge.

This sequence belongs to the tannase family.

The protein resides in the secreted. The catalysed reaction is feruloyl-polysaccharide + H2O = ferulate + polysaccharide.. Involved in degradation of plant cell walls. Hydrolyzes the feruloyl-arabinose ester bond in arabinoxylans as well as the feruloyl-galactose and feruloyl-arabinose ester bonds in pectin. The sequence is that of Probable feruloyl esterase B (faeB) from Aspergillus niger (strain ATCC MYA-4892 / CBS 513.88 / FGSC A1513).